The sequence spans 185 residues: Elongation factor P (185 aa).

Belongs to the elongation factor P family.

Its subcellular location is the cytoplasm. It functions in the pathway protein biosynthesis; polypeptide chain elongation. Its function is as follows. Involved in peptide bond synthesis. Stimulates efficient translation and peptide-bond synthesis on native or reconstituted 70S ribosomes in vitro. Probably functions indirectly by altering the affinity of the ribosome for aminoacyl-tRNA, thus increasing their reactivity as acceptors for peptidyl transferase. The protein is Elongation factor P of Burkholderia cenocepacia (strain HI2424).